A 424-amino-acid polypeptide reads, in one-letter code: Trigger factor (424 aa).

A PPIase FKBP-type domain is found at 163–248; that stretch reads GDTVVLDFEG…IHEIKAKELP (86 aa).

Belongs to the FKBP-type PPIase family. Tig subfamily.

Its subcellular location is the cytoplasm. The enzyme catalyses [protein]-peptidylproline (omega=180) = [protein]-peptidylproline (omega=0). Functionally, involved in protein export. Acts as a chaperone by maintaining the newly synthesized protein in an open conformation. Functions as a peptidyl-prolyl cis-trans isomerase. The polypeptide is Trigger factor (Bacillus licheniformis (strain ATCC 14580 / DSM 13 / JCM 2505 / CCUG 7422 / NBRC 12200 / NCIMB 9375 / NCTC 10341 / NRRL NRS-1264 / Gibson 46)).